A 600-amino-acid polypeptide reads, in one-letter code: Elongation factor 4 (600 aa).

Residues 5-187 (KYIRNFSIVA…EIVEKIPAPE (183 aa)) enclose the tr-type G domain. Residues 17-22 (DHGKST) and 134-137 (NKVD) each bind GTP.

The protein belongs to the TRAFAC class translation factor GTPase superfamily. Classic translation factor GTPase family. LepA subfamily.

The protein resides in the cell membrane. The catalysed reaction is GTP + H2O = GDP + phosphate + H(+). In terms of biological role, required for accurate and efficient protein synthesis under certain stress conditions. May act as a fidelity factor of the translation reaction, by catalyzing a one-codon backward translocation of tRNAs on improperly translocated ribosomes. Back-translocation proceeds from a post-translocation (POST) complex to a pre-translocation (PRE) complex, thus giving elongation factor G a second chance to translocate the tRNAs correctly. Binds to ribosomes in a GTP-dependent manner. This is Elongation factor 4 from Clostridium perfringens (strain 13 / Type A).